The chain runs to 304 residues: Phytol kinase 1, chloroplastic (304 aa).

The N-terminal 59 residues, 1–59 (MAATLPLSPINHQLCRFGNNSLTTHRFCSPGFLISSPCFIGLTGMGSATQLRARRSLIS), are a transit peptide targeting the chloroplast. The next 6 membrane-spanning stretches (helical) occupy residues 71 to 91 (VGAT…FESL), 105 to 125 (LVHI…SGST), 129 to 149 (YFAA…GLSI), 167 to 187 (ELLK…VFFW), 191 to 211 (PIGM…DIMG), and 227 to 247 (WAGS…LLYY).

It belongs to the polyprenol kinase family.

The protein resides in the plastid. The protein localises to the chloroplast membrane. The catalysed reaction is phytol + CTP = phytyl phosphate + CDP + H(+). Its pathway is cofactor biosynthesis; tocopherol biosynthesis. Functionally, kinase involved in the activation and reutilization of phytol from chlorophyll degradation in plant metabolism, including tocopherol biosynthesis. Catalyzes the conversion of phytol to phytol monophosphate (PMP) in the presence of CTP or UTP. No activity with ATP or GTP as phosphoryl donor. This is Phytol kinase 1, chloroplastic from Arabidopsis thaliana (Mouse-ear cress).